Here is a 426-residue protein sequence, read N- to C-terminus: Endothelin-1 receptor (426 aa).

A signal peptide spans 1–20; sequence MGVLCFLASFWLALVGGAIA. Topologically, residues 21 to 80 are extracellular; that stretch reads DNAERYSANLSSHVEDFTPFPGTEFNFLGTTLQPPNLALPSNGSMHGYCPQQTKITTAFK. N-linked (GlcNAc...) asparagine glycosylation is found at Asn29 and Asn62. Residues 81 to 102 traverse the membrane as a helical segment; the sequence is YINTVISCTIFIVGMVGNATLL. Residues 103–112 lie on the Cytoplasmic side of the membrane; sequence RIIYQNKCMR. A helical transmembrane segment spans residues 113–132; it reads NGPNALIASLALGDLIYVVI. At 133–159 the chain is on the extracellular side; sequence DLPINVFKLLAGRWPFDHNDFGVFLCK. A disulfide bond links Cys158 and Cys239. The chain crosses the membrane as a helical span at residues 160–181; the sequence is LFPFLQKSSVGITVLNLCALSV. At 182-205 the chain is on the cytoplasmic side; the sequence is DRYRAVASWSRVQGIGIPLITAIE. The chain crosses the membrane as a helical span at residues 206–229; sequence IVSIWILSFILAIPEAIGFVMVPF. At 230-256 the chain is on the extracellular side; that stretch reads EYKGEQHRTCMLNATTKFMEFYQDVKD. Residues 257 to 278 form a helical membrane-spanning segment; it reads WWLFGFYFCMPLVCTAIFYTLM. Topologically, residues 279–306 are cytoplasmic; sequence TCEMLNRRNGSLRIALSEHLKQRREVAK. A helical transmembrane segment spans residues 307–328; it reads TVFCLVVIFALCWFPLHLSRIL. Residues 329 to 347 lie on the Extracellular side of the membrane; that stretch reads KKTVYDEMDKNRCELLSFL. Residues 348–372 traverse the membrane as a helical segment; sequence LLMDYIGINLATMNSCINPIALYFV. Residues 373–426 are Cytoplasmic-facing; the sequence is SKKFKNCFQSCLCCCCHQSKSLMTSVPMNGTSIQWKNQEQNHNTERSSHKDSMN. Phosphoserine is present on Ser424.

The protein belongs to the G-protein coupled receptor 1 family. Endothelin receptor subfamily. EDNRA sub-subfamily. Interacts with HDAC7 and KAT5. Predominantly expressed in vascular smooth muscle cells of a variety of issues, bronchial smooth muscle cells, myocardium, and the pituitary gland.

Its subcellular location is the cell membrane. In terms of biological role, receptor for endothelin-1. Mediates its action by association with G proteins that activate a phosphatidylinositol-calcium second messenger system. The rank order of binding affinities for ET-A is: ET1 &gt; ET2 &gt;&gt; ET3. The protein is Endothelin-1 receptor of Rattus norvegicus (Rat).